The chain runs to 183 residues: Endoribonuclease YbeY (183 aa).

Zn(2+) contacts are provided by His140, His144, and His150.

Belongs to the endoribonuclease YbeY family. Requires Zn(2+) as cofactor.

The protein localises to the cytoplasm. In terms of biological role, single strand-specific metallo-endoribonuclease involved in late-stage 70S ribosome quality control and in maturation of the 3' terminus of the 16S rRNA. This Bradyrhizobium diazoefficiens (strain JCM 10833 / BCRC 13528 / IAM 13628 / NBRC 14792 / USDA 110) protein is Endoribonuclease YbeY.